A 150-amino-acid polypeptide reads, in one-letter code: Putative esterase SSO1253 (150 aa).

Belongs to the thioesterase PaaI family.

This Saccharolobus solfataricus (strain ATCC 35092 / DSM 1617 / JCM 11322 / P2) (Sulfolobus solfataricus) protein is Putative esterase SSO1253.